A 148-amino-acid chain; its full sequence is Putative pre-16S rRNA nuclease (148 aa).

Belongs to the YqgF nuclease family.

The protein localises to the cytoplasm. In terms of biological role, could be a nuclease involved in processing of the 5'-end of pre-16S rRNA. In Chlamydia trachomatis serovar A (strain ATCC VR-571B / DSM 19440 / HAR-13), this protein is Putative pre-16S rRNA nuclease.